The chain runs to 625 residues: Thioredoxin domain-containing protein 6 (625 aa).

The tract at residues 158 to 302 (KSYTVAIIKP…FFFPNFKISN (145 aa)) is NDK. The tract at residues 594-625 (GETPETSASDISRNAAAQGDDPEQDESKEMEE) is disordered. Residues 613-625 (DDPEQDESKEMEE) are compositionally biased toward acidic residues.

Belongs to the NDK family. As to quaternary structure, monomer and homodimer.

It localises to the cytoplasm. The protein resides in the cytoskeleton. The protein localises to the cilium axoneme. It is found in the dynein axonemal particle. In terms of biological role, may be a regulator of microtubule physiology. This chain is Thioredoxin domain-containing protein 6, found in Xenopus laevis (African clawed frog).